We begin with the raw amino-acid sequence, 620 residues long: Mitochondrial Rho GTPase 2 (620 aa).

Residues 1-594 (MRRDVRILLL…ELHPTSFWLR (594 aa)) are Cytoplasmic-facing. One can recognise a Miro 1 domain in the interval 2 to 168 (RRDVRILLLG…FYYAQKAVLH (167 aa)). 4 residues coordinate GTP: glycine 16, lysine 17, threonine 18, and serine 19. Threonine 18 provides a ligand contact to Mg(2+). Aspartate 57 is a Mg(2+) binding site. A GTP-binding site is contributed by serine 59. Lysine 96 participates in a covalent cross-link: Glycyl lysine isopeptide (Lys-Gly) (interchain with G-Cter in ubiquitin). 5 residues coordinate GTP: asparagine 118, lysine 119, aspartate 121, alanine 149, and lysine 150. A Glycyl lysine isopeptide (Lys-Gly) (interchain with G-Cter in ubiquitin) cross-link involves residue lysine 119. Residue lysine 164 forms a Glycyl lysine isopeptide (Lys-Gly) (interchain with G-Cter in ubiquitin) linkage. 2 consecutive EF-hand domains span residues 184–219 (ACAQ…CFGH) and 304–339 (RGYQ…FSGA). Aspartate 197, aspartate 199, aspartate 201, glutamate 208, aspartate 317, aspartate 319, aspartate 321, and glutamate 328 together coordinate Ca(2+). One can recognise a Miro 2 domain in the interval 415–578 (RSVLMCKVLG…FTQLATMATF (164 aa)). Residues glycine 427, glycine 429, lysine 430, serine 431, and alanine 432 each coordinate GTP. Mg(2+) is bound at residue serine 431. Glutamate 473 provides a ligand contact to Mg(2+). GTP-binding residues include lysine 527, aspartate 529, and cysteine 558. A helical; Anchor for type IV membrane protein membrane pass occupies residues 595 to 617 (GVLVAVGTAVAAVLSFSLYRVLV). At 618-620 (KSR) the chain is on the mitochondrial intermembrane side.

The protein belongs to the mitochondrial Rho GTPase family. As to quaternary structure, homodimer. Interacts with the kinesin-binding proteins TRAK1/OIP106 and TRAK2/GRIF1, forming a link between mitochondria and the trafficking apparatus of the microtubules. Interacts with ARMCX3. Found in a complex with KIF5B, OGT, RHOT1 and TRAK1. In terms of processing, ubiquitinated by PRKN in a PINK1-dependent manner, leading to its degradation. As to expression, ubiquitously expressed.

The protein localises to the mitochondrion outer membrane. It carries out the reaction GTP + H2O = GDP + phosphate + H(+). The enzyme catalyses ATP + H2O = ADP + phosphate + H(+). It catalyses the reaction UTP + H2O = UDP + phosphate + H(+). Atypical mitochondrial nucleoside-triphosphatase (NTPase) involved in mitochondrial trafficking. Probably involved in control of anterograde transport of mitochondria and their subcellular distribution. Can hydrolyze GTP, ATP and UTP. The polypeptide is Mitochondrial Rho GTPase 2 (Rhot2) (Mus musculus (Mouse)).